We begin with the raw amino-acid sequence, 312 residues long: Acetaldehyde dehydrogenase 2 (312 aa).

Residue 11–14 participates in NAD(+) binding; the sequence is SGNI. The active-site Acyl-thioester intermediate is cysteine 129. NAD(+)-binding positions include 160–168 and asparagine 287; that span reads SAGPGTRAN.

The protein belongs to the acetaldehyde dehydrogenase family.

It catalyses the reaction acetaldehyde + NAD(+) + CoA = acetyl-CoA + NADH + H(+). This chain is Acetaldehyde dehydrogenase 2, found in Novosphingobium aromaticivorans (strain ATCC 700278 / DSM 12444 / CCUG 56034 / CIP 105152 / NBRC 16084 / F199).